Reading from the N-terminus, the 282-residue chain is Energy-coupling factor transporter ATP-binding protein EcfA1 (282 aa).

One can recognise an ABC transporter domain in the interval 6–243 (ISFDHVTFTY…VEMLKRIGLD (238 aa)). 40 to 47 (GHNGSGKS) serves as a coordination point for ATP.

Belongs to the ABC transporter superfamily. Energy-coupling factor EcfA family. In terms of assembly, forms a stable energy-coupling factor (ECF) transporter complex composed of 2 membrane-embedded substrate-binding proteins (S component), 2 ATP-binding proteins (A component) and 2 transmembrane proteins (T component).

The protein localises to the cell membrane. Functionally, ATP-binding (A) component of a common energy-coupling factor (ECF) ABC-transporter complex. Unlike classic ABC transporters this ECF transporter provides the energy necessary to transport a number of different substrates. The polypeptide is Energy-coupling factor transporter ATP-binding protein EcfA1 (Lactobacillus delbrueckii subsp. bulgaricus (strain ATCC BAA-365 / Lb-18)).